A 111-amino-acid polypeptide reads, in one-letter code: Resistin-like alpha (111 aa).

Residues 1 to 23 (MKTTTCSLLICISLLQLMVPVNT) form the signal peptide. Intrachain disulfides connect Cys-55–Cys-108, Cys-67–Cys-107, Cys-76–Cys-93, Cys-78–Cys-95, and Cys-82–Cys-97.

Belongs to the resistin/FIZZ family. In terms of assembly, monomer. In terms of tissue distribution, highest levels in adipose tissue.

Its subcellular location is the secreted. Its function is as follows. Probable hormone. Plays a role in pulmonary vascular remodeling. The polypeptide is Resistin-like alpha (Retnla) (Mus musculus (Mouse)).